A 416-amino-acid chain; its full sequence is MTEIYRTISTGRGDDVSPTKCRERRRRRIEMRRQAAVFGEPSSSRNRDRTDMEVYSSFDVPLRKQARRSEIGGLPADIGGFLAPPAASSCQKSEAPVWKGEETEDEPLYGIVSVMGRSRKMEDSVTVKPNLCKPEVNRQRPVHFFAVYDGHGGSQVSTLCSTTMHTFVKEELEQNLEEEEEGSENDVVERKWRGVMKRSFKRMDEMATSTCVCGTSVPLCNCDPREAAISGSTAVTAVLTHDHIIVANTGDSRAVLCRNGMAIPLSNDHKPDRPDERARIEAAGGRVLVVDGARVEGILATSRAIGDRYLKPMVAWEPEVTFMRRESGDECLVLASDGLWDVLSSQLACDIARFCLREETPSSLDLNRMAQEDDNDGEQNPSRSVLAATLLTRLALGRQSSDNISVVVIDLKNSSQ.

2 disordered regions span residues 1 to 20 and 32 to 51; these read MTEI…SPTK and RRQA…DRTD. Residues 108–411 enclose the PPM-type phosphatase domain; sequence LYGIVSVMGR…DNISVVVIDL (304 aa). Mn(2+)-binding residues include D149, G150, D337, and D402.

The protein belongs to the PP2C family. It depends on Mg(2+) as a cofactor. The cofactor is Mn(2+).

The catalysed reaction is O-phospho-L-seryl-[protein] + H2O = L-seryl-[protein] + phosphate. It catalyses the reaction O-phospho-L-threonyl-[protein] + H2O = L-threonyl-[protein] + phosphate. Its function is as follows. Negative regulator of abscisic acid (ABA) responses during seed germination. This Arabidopsis thaliana (Mouse-ear cress) protein is Probable protein phosphatase 2C 75 (AHG1).